The primary structure comprises 817 residues: Phosphoenolpyruvate synthase (817 aa).

His442 (tele-phosphohistidine intermediate) is an active-site residue. Arg540, Arg587, Glu684, Gly706, Thr707, Asn708, and Asp709 together coordinate substrate. Residue Glu684 participates in Mg(2+) binding. Asp709 is a binding site for Mg(2+). The active-site Proton donor is Cys756.

This sequence belongs to the PEP-utilizing enzyme family. In terms of assembly, homooctamer. It depends on Mg(2+) as a cofactor.

It catalyses the reaction pyruvate + ATP + H2O = phosphoenolpyruvate + AMP + phosphate + 2 H(+). Its pathway is carbohydrate biosynthesis; gluconeogenesis. Catalyzes the phosphorylation of pyruvate to phosphoenolpyruvate. This is Phosphoenolpyruvate synthase (ppsA) from Pyrococcus furiosus (strain ATCC 43587 / DSM 3638 / JCM 8422 / Vc1).